The following is a 46-amino-acid chain: Photosystem II reaction center protein K (46 aa).

A propeptide spanning residues 1-9 (MESILMIFA) is cleaved from the precursor. A helical transmembrane segment spans residues 25-45 (LPVIPVLFLLLAFVWQAAVSF).

The protein belongs to the PsbK family. PSII is composed of 1 copy each of membrane proteins PsbA, PsbB, PsbC, PsbD, PsbE, PsbF, PsbH, PsbI, PsbJ, PsbK, PsbL, PsbM, PsbT, PsbX, PsbY, PsbZ, Psb30/Ycf12, at least 3 peripheral proteins of the oxygen-evolving complex and a large number of cofactors. It forms dimeric complexes.

It localises to the plastid. Its subcellular location is the chloroplast thylakoid membrane. One of the components of the core complex of photosystem II (PSII). PSII is a light-driven water:plastoquinone oxidoreductase that uses light energy to abstract electrons from H(2)O, generating O(2) and a proton gradient subsequently used for ATP formation. It consists of a core antenna complex that captures photons, and an electron transfer chain that converts photonic excitation into a charge separation. In Stigeoclonium helveticum (Green alga), this protein is Photosystem II reaction center protein K.